The sequence spans 297 residues: Probable endonuclease 4 (297 aa).

H69, H110, E145, D179, H182, H214, D227, H229, and E259 together coordinate Zn(2+).

Belongs to the AP endonuclease 2 family. The cofactor is Zn(2+).

The enzyme catalyses Endonucleolytic cleavage to 5'-phosphooligonucleotide end-products.. Functionally, endonuclease IV plays a role in DNA repair. It cleaves phosphodiester bonds at apurinic or apyrimidinic (AP) sites, generating a 3'-hydroxyl group and a 5'-terminal sugar phosphate. The sequence is that of Probable endonuclease 4 from Listeria monocytogenes serovar 1/2a (strain ATCC BAA-679 / EGD-e).